Consider the following 1113-residue polypeptide: Translation initiation factor IF-2 (1113 aa).

Composition is skewed to polar residues over residues 56 to 72, 129 to 139, 162 to 187, and 194 to 205; these read QSNQSINNKTKQNSSKE, KANTSNQSKGV, LENNASKQNIEDNNNFQERSPRTQLV, and TKNNEPPQQKTS. 2 disordered regions span residues 56-446 and 470-504; these read QSNQ…IGEN and LARPAKPKSTKKSNSKATVVTRKRKKESTRQRQRR. Low complexity predominate over residues 248 to 265; that stretch reads PVQPRTQNNQNRQRIPNK. Basic and acidic residues predominate over residues 415–429; the sequence is RRSDWDDAAKLEALR. Composition is skewed to basic residues over residues 474–483 and 490–504; these read AKPKSTKKSN and TRKRKKESTRQRQRR. A tr-type G domain is found at 605–777; the sequence is RRPPVVTVMG…VLLVTEVEDL (173 aa). Positions 614–621 are G1; it reads GHVDHGKT. Residue 614–621 participates in GTP binding; sequence GHVDHGKT. The G2 stretch occupies residues 639–643; that stretch reads GITQH. Positions 664–667 are G3; it reads DTPG. Residues 664-668 and 718-721 contribute to the GTP site; these read DTPGH and NKID. The G4 stretch occupies residues 718–721; that stretch reads NKID. Positions 754-756 are G5; that stretch reads SAI.

This sequence belongs to the TRAFAC class translation factor GTPase superfamily. Classic translation factor GTPase family. IF-2 subfamily.

It localises to the cytoplasm. Its function is as follows. One of the essential components for the initiation of protein synthesis. Protects formylmethionyl-tRNA from spontaneous hydrolysis and promotes its binding to the 30S ribosomal subunits. Also involved in the hydrolysis of GTP during the formation of the 70S ribosomal complex. The polypeptide is Translation initiation factor IF-2 (Prochlorococcus marinus (strain MIT 9211)).